Reading from the N-terminus, the 252-residue chain is tRNA (guanine-N(7)-)-methyltransferase (252 aa).

The S-adenosyl-L-methionine site is built by Glu80, Glu105, Asp132, and Asp155. Residue Asp155 is part of the active site. Substrate contacts are provided by residues Lys159, Asp191, and 231–234 (TKFE).

Belongs to the class I-like SAM-binding methyltransferase superfamily. TrmB family.

The catalysed reaction is guanosine(46) in tRNA + S-adenosyl-L-methionine = N(7)-methylguanosine(46) in tRNA + S-adenosyl-L-homocysteine. It participates in tRNA modification; N(7)-methylguanine-tRNA biosynthesis. In terms of biological role, catalyzes the formation of N(7)-methylguanine at position 46 (m7G46) in tRNA. This chain is tRNA (guanine-N(7)-)-methyltransferase, found in Actinobacillus succinogenes (strain ATCC 55618 / DSM 22257 / CCUG 43843 / 130Z).